A 318-amino-acid chain; its full sequence is tRNA U34 carboxymethyltransferase (318 aa).

Residues Lys-88, Trp-102, Lys-107, Gly-126, 176–177 (LE), Met-192, Tyr-196, and Arg-311 each bind carboxy-S-adenosyl-L-methionine.

This sequence belongs to the class I-like SAM-binding methyltransferase superfamily. CmoB family. Homotetramer.

It catalyses the reaction carboxy-S-adenosyl-L-methionine + 5-hydroxyuridine(34) in tRNA = 5-carboxymethoxyuridine(34) in tRNA + S-adenosyl-L-homocysteine + H(+). Its function is as follows. Catalyzes carboxymethyl transfer from carboxy-S-adenosyl-L-methionine (Cx-SAM) to 5-hydroxyuridine (ho5U) to form 5-carboxymethoxyuridine (cmo5U) at position 34 in tRNAs. The chain is tRNA U34 carboxymethyltransferase from Pseudomonas putida (strain GB-1).